Here is an 88-residue protein sequence, read N- to C-terminus: Small ribosomal subunit protein uS15c (88 aa).

Belongs to the universal ribosomal protein uS15 family. As to quaternary structure, part of the 30S ribosomal subunit.

The protein resides in the plastid. It is found in the chloroplast. The protein is Small ribosomal subunit protein uS15c (rps15) of Calycanthus floridus var. glaucus (Eastern sweetshrub).